We begin with the raw amino-acid sequence, 637 residues long: Threonine--tRNA ligase (637 aa).

One can recognise a TGS domain in the interval 1–61; that stretch reads MIKITLKDGK…NEDSTLEILT (61 aa). A catalytic region spans residues 242 to 532; sequence DHRKLGKELG…LTEHYAGAFP (291 aa). Zn(2+) is bound by residues Cys333, His384, and His509.

Belongs to the class-II aminoacyl-tRNA synthetase family. In terms of assembly, homodimer. Requires Zn(2+) as cofactor.

It localises to the cytoplasm. It carries out the reaction tRNA(Thr) + L-threonine + ATP = L-threonyl-tRNA(Thr) + AMP + diphosphate + H(+). In terms of biological role, catalyzes the attachment of threonine to tRNA(Thr) in a two-step reaction: L-threonine is first activated by ATP to form Thr-AMP and then transferred to the acceptor end of tRNA(Thr). Also edits incorrectly charged L-seryl-tRNA(Thr). The sequence is that of Threonine--tRNA ligase from Clostridium novyi (strain NT).